The following is a 445-amino-acid chain: Xylose isomerase (445 aa).

Active-site residues include His107 and Asp110. Mg(2+)-binding residues include Glu238, Glu274, His277, Asp302, Asp313, Asp315, and Asp345.

It belongs to the xylose isomerase family. Homotetramer. Requires Mg(2+) as cofactor.

Its subcellular location is the cytoplasm. The enzyme catalyses alpha-D-xylose = alpha-D-xylulofuranose. In Bacillus velezensis (strain DSM 23117 / BGSC 10A6 / LMG 26770 / FZB42) (Bacillus amyloliquefaciens subsp. plantarum), this protein is Xylose isomerase.